The following is a 394-amino-acid chain: NAD(P)H-quinone oxidoreductase subunit H (394 aa).

Belongs to the complex I 49 kDa subunit family. NDH-1 can be composed of about 15 different subunits; different subcomplexes with different compositions have been identified which probably have different functions.

The protein localises to the cellular thylakoid membrane. The enzyme catalyses a plastoquinone + NADH + (n+1) H(+)(in) = a plastoquinol + NAD(+) + n H(+)(out). It carries out the reaction a plastoquinone + NADPH + (n+1) H(+)(in) = a plastoquinol + NADP(+) + n H(+)(out). In terms of biological role, NDH-1 shuttles electrons from an unknown electron donor, via FMN and iron-sulfur (Fe-S) centers, to quinones in the respiratory and/or the photosynthetic chain. The immediate electron acceptor for the enzyme in this species is believed to be plastoquinone. Couples the redox reaction to proton translocation, and thus conserves the redox energy in a proton gradient. Cyanobacterial NDH-1 also plays a role in inorganic carbon-concentration. This is NAD(P)H-quinone oxidoreductase subunit H from Thermosynechococcus vestitus (strain NIES-2133 / IAM M-273 / BP-1).